Reading from the N-terminus, the 247-residue chain is ATP synthase subunit a (247 aa).

6 helical membrane-spanning segments follow: residues 24-44 (IAFTNSSAYMFLAVALTSLLM), 82-102 (FFPFVFSIFMLVTVSNLVGII), 112-132 (IIVTAALAFLVFFTVLIYGFY), 141-161 (LFVPSGIPVVILPLVVTIEVI), 194-214 (MLGAMGIVGVFGAVLPLALVV), and 219-239 (LELLVAFLQAYVFTILTCIYI).

The protein belongs to the ATPase A chain family. In terms of assembly, F-type ATPases have 2 components, CF(1) - the catalytic core - and CF(0) - the membrane proton channel. CF(1) has five subunits: alpha(3), beta(3), gamma(1), delta(1), epsilon(1). CF(0) has three main subunits: a(1), b(2) and c(9-12). The alpha and beta chains form an alternating ring which encloses part of the gamma chain. CF(1) is attached to CF(0) by a central stalk formed by the gamma and epsilon chains, while a peripheral stalk is formed by the delta and b chains.

Its subcellular location is the cell inner membrane. Functionally, key component of the proton channel; it plays a direct role in the translocation of protons across the membrane. The polypeptide is ATP synthase subunit a (Nitrobacter winogradskyi (strain ATCC 25391 / DSM 10237 / CIP 104748 / NCIMB 11846 / Nb-255)).